A 149-amino-acid polypeptide reads, in one-letter code: Urease accessory protein UreE (149 aa).

It belongs to the UreE family.

It localises to the cytoplasm. Involved in urease metallocenter assembly. Binds nickel. Probably functions as a nickel donor during metallocenter assembly. The chain is Urease accessory protein UreE from Ruegeria pomeroyi (strain ATCC 700808 / DSM 15171 / DSS-3) (Silicibacter pomeroyi).